The chain runs to 64 residues: MAVQKSRVTPSRRGQRRSHDALTAKQLSTDPTSGEIHLRHHITADGYYRGKKVITTKSSAVQED.

A disordered region spans residues 1–35; sequence MAVQKSRVTPSRRGQRRSHDALTAKQLSTDPTSGE.

It belongs to the bacterial ribosomal protein bL32 family.

This Xanthomonas campestris pv. campestris (strain 8004) protein is Large ribosomal subunit protein bL32.